Consider the following 331-residue polypeptide: Adenosine deaminase (331 aa).

Zn(2+) is bound by residues histidine 12 and histidine 14. Substrate is bound by residues histidine 14, aspartate 16, and glycine 170. Histidine 197 is a binding site for Zn(2+). Glutamate 200 serves as the catalytic Proton donor. Aspartate 278 is a Zn(2+) binding site. Residue aspartate 279 coordinates substrate.

It belongs to the metallo-dependent hydrolases superfamily. Adenosine and AMP deaminases family. Adenosine deaminase subfamily. Zn(2+) is required as a cofactor.

It catalyses the reaction adenosine + H2O + H(+) = inosine + NH4(+). The catalysed reaction is 2'-deoxyadenosine + H2O + H(+) = 2'-deoxyinosine + NH4(+). Catalyzes the hydrolytic deamination of adenosine and 2-deoxyadenosine. This chain is Adenosine deaminase, found in Shewanella sp. (strain W3-18-1).